The primary structure comprises 480 residues: UDP-N-acetylmuramate--L-alanine ligase (480 aa).

129-135 (GTHGKTT) contributes to the ATP binding site.

It belongs to the MurCDEF family.

It localises to the cytoplasm. It carries out the reaction UDP-N-acetyl-alpha-D-muramate + L-alanine + ATP = UDP-N-acetyl-alpha-D-muramoyl-L-alanine + ADP + phosphate + H(+). The protein operates within cell wall biogenesis; peptidoglycan biosynthesis. Cell wall formation. The polypeptide is UDP-N-acetylmuramate--L-alanine ligase (Mannheimia succiniciproducens (strain KCTC 0769BP / MBEL55E)).